The following is a 310-amino-acid chain: Vomeronasal type-1 receptor 93 (310 aa).

Over Met1–Glu20 the chain is Extracellular. A helical membrane pass occupies residues Val21–Gly41. Residues Glu42–Gln59 lie on the Cytoplasmic side of the membrane. Residues Leu60–Trp80 form a helical membrane-spanning segment. Topologically, residues Asp81–Arg93 are extracellular. An intrachain disulfide couples Cys85 to Cys172. A helical transmembrane segment spans residues Leu94–Leu114. The Cytoplasmic segment spans residues Ser115 to Gly134. The chain crosses the membrane as a helical span at residues Ala135–Ile155. At Ala156–Glu193 the chain is on the extracellular side. An N-linked (GlcNAc...) asparagine glycan is attached at Asn159. Residues Ala194–His214 traverse the membrane as a helical segment. The Cytoplasmic segment spans residues Arg215–Glu238. The chain crosses the membrane as a helical span at residues Thr239–Tyr259. The Extracellular portion of the chain corresponds to Ser260–Thr269. A helical membrane pass occupies residues Phe270–Ile290. The Cytoplasmic portion of the chain corresponds to Phe291–Ile310.

Belongs to the G-protein coupled receptor 1 family. As to expression, expressed in 1-4% of neurons of the vomeronasal organ. Only one pheromone receptor gene may be expressed in a particular neuron. Not expressed in the main olfactory epithelium.

The protein localises to the cell membrane. Putative pheromone receptor implicated in the regulation of social as well as reproductive behavior. In Rattus norvegicus (Rat), this protein is Vomeronasal type-1 receptor 93 (Vom1r93).